The sequence spans 60 residues: Large ribosomal subunit protein bL33 (60 aa).

It belongs to the bacterial ribosomal protein bL33 family.

This is Large ribosomal subunit protein bL33 from Flavobacterium johnsoniae (strain ATCC 17061 / DSM 2064 / JCM 8514 / BCRC 14874 / CCUG 350202 / NBRC 14942 / NCIMB 11054 / UW101) (Cytophaga johnsonae).